The sequence spans 472 residues: Acyltransferase PapA3 (472 aa).

It belongs to the PapA acyltransferase family.

The catalysed reaction is a long-chain fatty acyl-CoA + alpha,alpha-trehalose = a 2-O-(long-chain fatty acyl)-alpha,alpha-trehalose + CoA. It carries out the reaction a mycolipenoyl-CoA + a 2-O-(long-chain fatty acyl)-alpha,alpha-trehalose = a 2-O-(long-chain fatty acyl)-3-O-mycolipenoyl-trehalose + CoA. The enzyme catalyses alpha,alpha-trehalose + hexadecanoyl-CoA = 2-O-hexadecanoyl-alpha,alpha-trehalose + CoA. It catalyses the reaction 2-O-hexadecanoyl-alpha,alpha-trehalose + hexadecanoyl-CoA = 2-O,3-O-dihexadecanoyl-alpha,alpha-trehalose + CoA. Involved in the biosynthesis of polyacyltrehalose (PAT), a pentaacylated, trehalose-based glycolipid that could have a role in anchoring the bacterial capsule. Catalyzes the sequential transfer of two palmitoyl groups onto a single glucose residue of trehalose generating the diacylated product 2,3-diacyltrehalose (trehalose dipalmitate). The chain is Acyltransferase PapA3 (papA3) from Mycobacterium tuberculosis (strain CDC 1551 / Oshkosh).